We begin with the raw amino-acid sequence, 723 residues long: Dipeptidyl aminopeptidase BI (723 aa).

The signal sequence occupies residues 1–23 (MKPTSLLLAATVLMSTPITSALA). Catalysis depends on charge relay system residues Ser-574, Asp-659, and His-694.

This sequence belongs to the peptidase S9A family. As to quaternary structure, monomer.

Its activity is regulated as follows. Nearly completely inhibited by 0.5 mM ZnCl(2), 0.1 mM N-tosyl-L-lysyl chloromethyl ketone (TLCK) and 0.1 mM leupeptin. Strongly inhibited by 0.5 mM CoCl(2) and 0.1 mM chymostatin. Activity is hardly affected by general serine protease inhibitors phenylmethanesulfonyl fluoride (PMSF), diisopropyl fluorophosphate (DFP) and N-tosyl-L-phenyl-alanyl chloromethyl ketone (TPCK) or by aspartyl protease inhibitor pepstatin A or by CaCl(2) and EDTA. Cysteine protease inhibitors, such as N-ethylmaleimide (NEM), iodoacetic acid and L-trans-epoxysuccinyl-leucylamido(4-guanido)butane (E-64) have no effect on activity. In terms of biological role, sequentially removes dipeptide units (NH3-P2-P1-) from the amino termini of peptides and proteins. Is able to catalyze the removal of Asp-Arg from the amino termini of angiotensins I and II. Has slight endopeptidase activity on N-terminally blocked peptide derivatives which contain arginine residues at the P1 position. Does not hydrolyze Ala-Ala-Ala and Ala-Ala-Ala-Ala substrates or insulin beta chain. The protein is Dipeptidyl aminopeptidase BI of Pseudoxanthomonas mexicana.